The following is a 135-amino-acid chain: UPF0329 protein ECU07_1860/ECU10_0040/ECU11_2100 (135 aa).

Belongs to the UPF0329 family.

This is UPF0329 protein ECU07_1860/ECU10_0040/ECU11_2100 from Encephalitozoon cuniculi (strain GB-M1) (Microsporidian parasite).